The sequence spans 413 residues: Probable aminotransferase sirI (413 aa).

Position 255 is an N6-(pyridoxal phosphate)lysine (lysine 255).

This sequence belongs to the class-I pyridoxal-phosphate-dependent aminotransferase family. It depends on pyridoxal 5'-phosphate as a cofactor.

It participates in mycotoxin biosynthesis. Functionally, probable aminotransferase; part of the gene cluster that mediates the biosynthesis of sirodesmin PL, an epipolythiodioxopiperazine (ETP) characterized by a disulfide bridged cyclic dipeptide and that acts as a phytotoxin which is involved in the blackleg didease of canola. SirD catalyzes the O-prenylation of L-tyrosine (L-Tyr) in the presence of dimethylallyl diphosphate (DMAPP) to yield 4-O-dimethylallyl-L-Tyr, and therefore represents probably the first pathway-specific enzyme in the biosynthesis of sirodesmin PL. 4-O-dimethylallyl-L-Tyr, then undergoes condensation with L-Ser in a reaction catalyzed by the non-ribosomal peptide synthase sirP to form the diketopiperazine (DKP) backbone. Further bishydroxylation of the DKP performed by the cytochrome P450 monooxygenase sirC leads to the production of the intermediate phomamide. This step is essential to form the reactive thiol group required for toxicity of sirodesmin PL. The next steps of sirodesmin biosynthesis are not well understood yet, but some predictions could be made from intermediate compounds identification. Phomamide is converted into phomalizarine via oxidation, probably by sirT. Further oxidation, methylation (by sirM or sirN) and reduction steps convert phomalizarine to deacetyl sirodesmin. Finally, acetyltransferase sirH probably acetylates deacetyl sirodesmin to produce sirodesmin PL. The polypeptide is Probable aminotransferase sirI (Leptosphaeria maculans (Blackleg fungus)).